Consider the following 1084-residue polypeptide: MKYHVGIDVGTFSVGLAAIEVDDAGMPIKTLSLVSHIHDSGLDPDEIKSAVTRLASSGIARRTRRLYRRKRRRLQQLDKFIQRQGWPVIELEDYSDPLYPWKVRAELAASYIADEKERGEKLSVALRHIARHRGWRNPYAKVSSLYLPDGPSDAFKAIREEIKRASGQPVPETATVGQMVTLCELGTLKLRGEGGVLSARLQQSDYAREIQEICRMQEIGQELYRKIIDVVFAAESPKGSASSRVGKDPLQPGKNRALKASDAFQRYRIAALIGNLRVRVDGEKRILSVEEKNLVFDHLVNLTPKKEPEWVTIAEILGIDRGQLIGTATMTDDGERAGARPPTHDTNRSIVNSRIAPLVDWWKTASALEQHAMVKALSNAEVDDFDSPEGAKVQAFFADLDDDVHAKLDSLHLPVGRAAYSEDTLVRLTRRMLSDGVDLYTARLQEFGIEPSWTPPTPRIGEPVGNPAVDRVLKTVSRWLESATKTWGAPERVIIEHVREGFVTEKRAREMDGDMRRRAARNAKLFQEMQEKLNVQGKPSRADLWRYQSVQRQNCQCAYCGSPITFSNSEMDHIVPRAGQGSTNTRENLVAVCHRCNQSKGNTPFAIWAKNTSIEGVSVKEAVERTRHWVTDTGMRSTDFKKFTKAVVERFQRATMDEEIDARSMESVAWMANELRSRVAQHFASHGTTVRVYRGSLTAEARRASGISGKLKFFDGVGKSRLDRRHHAIDAAVIAFTSDYVAETLAVRSNLKQSQAHRQEAPQWREFTGKDAEHRAAWRVWCQKMEKLSALLTEDLRDDRVVVMSNVRLRLGNGSAHKETIGKLSKVKLSSQLSVSDIDKASSEALWCALTREPGFDPKEGLPANPERHIRVNGTHVYAGDNIGLFPVSAGSIALRGGYAELGSSFHHARVYKITSGKKPAFAMLRVYTIDLLPYRNQDLFSVELKPQTMSMRQAEKKLRDALATGNAEYLGWLVVDDELVVDTSKIATDQVKAVEAELGTIRRWRVDGFFSPSKLRLRPLQMSKEGIKKESAPELSKIIDRPGWLPAVNKLFSDGNVTVVRRDSLGRVRLESTAHLPVTWKVQ.

Residue aspartate 8 is the For RuvC-like nuclease domain of the active site. Residues aspartate 8, glutamate 496, and glutamate 500 each coordinate Mn(2+). The 162-residue stretch at 504–665 (TEKRAREMDG…MDEEIDARSM (162 aa)) folds into the HNH Cas9-type domain. Histidine 573 acts as the Proton acceptor for HNH nuclease domain in catalysis. Histidine 727 lines the Mn(2+) pocket.

It belongs to the CRISPR-associated protein Cas9 family. Subtype II-C subfamily. In terms of assembly, monomer. Binds crRNA and tracrRNA. The cofactor is Mg(2+).

CRISPR (clustered regularly interspaced short palindromic repeat) is an adaptive immune system that provides protection against mobile genetic elements (viruses, transposable elements and conjugative plasmids). CRISPR clusters contain spacers, sequences complementary to antecedent mobile elements, and target invading nucleic acids. CRISPR clusters are transcribed and processed into CRISPR RNA (crRNA). In type II CRISPR systems correct processing of pre-crRNA requires a trans-encoded small RNA (tracrRNA), endogenous ribonuclease 3 (rnc) and this protein. The tracrRNA serves as a guide for ribonuclease 3-aided processing of pre-crRNA. Subsequently Cas9/crRNA/tracrRNA endonucleolytically cleaves linear or circular dsDNA target complementary to the spacer; Cas9 is inactive in the absence of the 2 guide RNAs (gRNA). Cas9 recognizes the protospacer adjacent motif (PAM) in the CRISPR repeat sequences to help distinguish self versus nonself, as targets within the bacterial CRISPR locus do not have PAMs. PAM recognition is also required for catalytic activity. The polypeptide is CRISPR-associated endonuclease Cas9 (Corynebacterium diphtheriae (strain ATCC 700971 / NCTC 13129 / Biotype gravis)).